The chain runs to 226 residues: Uracil-DNA glycosylase (226 aa).

The active-site Proton acceptor is the Asp64.

Belongs to the uracil-DNA glycosylase (UDG) superfamily. UNG family.

The protein localises to the cytoplasm. The enzyme catalyses Hydrolyzes single-stranded DNA or mismatched double-stranded DNA and polynucleotides, releasing free uracil.. Its function is as follows. Excises uracil residues from the DNA which can arise as a result of misincorporation of dUMP residues by DNA polymerase or due to deamination of cytosine. This is Uracil-DNA glycosylase from Proteus mirabilis (strain HI4320).